The following is a 144-amino-acid chain: UPF0102 protein BTH_I3148 (144 aa).

The disordered stretch occupies residues 1–20 (MCHARAARQATGEAEAAPRD).

It belongs to the UPF0102 family.

The protein is UPF0102 protein BTH_I3148 of Burkholderia thailandensis (strain ATCC 700388 / DSM 13276 / CCUG 48851 / CIP 106301 / E264).